The chain runs to 219 residues: 2-C-methyl-D-erythritol 4-phosphate cytidylyltransferase (219 aa).

Belongs to the IspD/TarI cytidylyltransferase family. IspD subfamily.

The catalysed reaction is 2-C-methyl-D-erythritol 4-phosphate + CTP + H(+) = 4-CDP-2-C-methyl-D-erythritol + diphosphate. Its pathway is isoprenoid biosynthesis; isopentenyl diphosphate biosynthesis via DXP pathway; isopentenyl diphosphate from 1-deoxy-D-xylulose 5-phosphate: step 2/6. In terms of biological role, catalyzes the formation of 4-diphosphocytidyl-2-C-methyl-D-erythritol from CTP and 2-C-methyl-D-erythritol 4-phosphate (MEP). In Endomicrobium trichonymphae, this protein is 2-C-methyl-D-erythritol 4-phosphate cytidylyltransferase.